A 326-amino-acid polypeptide reads, in one-letter code: Serine hydrolase-like protein (326 aa).

Positions 44–155 constitute an AB hydrolase-1 domain; it reads PVLCLHGWAD…FLPTEVTDMF (112 aa). Ser-118 is an active-site residue.

It belongs to the AB hydrolase superfamily.

In terms of biological role, probable serine hydrolase. The chain is Serine hydrolase-like protein (serhl) from Danio rerio (Zebrafish).